Here is a 238-residue protein sequence, read N- to C-terminus: Ribosomal RNA small subunit methyltransferase G (238 aa).

S-adenosyl-L-methionine is bound by residues G78, 129-130 (AE), and R148.

Belongs to the methyltransferase superfamily. RNA methyltransferase RsmG family.

It localises to the cytoplasm. Specifically methylates the N7 position of a guanine in 16S rRNA. This is Ribosomal RNA small subunit methyltransferase G from Caldicellulosiruptor bescii (strain ATCC BAA-1888 / DSM 6725 / KCTC 15123 / Z-1320) (Anaerocellum thermophilum).